Consider the following 197-residue polypeptide: Phosphoheptose isomerase (197 aa).

An SIS domain is found at 34–192; the sequence is MVNALINGNK…CEGVDDCLFP (159 aa). Substrate is bound by residues 49–51, Gln-62, 91–92, Ser-122, and His-172; these read NGG and ND. Zn(2+) is bound at residue Gln-62. 2 residues coordinate Zn(2+): His-172 and His-180.

It belongs to the SIS family. GmhA subfamily. In terms of assembly, homotetramer. Zn(2+) serves as cofactor.

The protein resides in the cytoplasm. It catalyses the reaction 2 D-sedoheptulose 7-phosphate = D-glycero-alpha-D-manno-heptose 7-phosphate + D-glycero-beta-D-manno-heptose 7-phosphate. The protein operates within carbohydrate biosynthesis; D-glycero-D-manno-heptose 7-phosphate biosynthesis; D-glycero-alpha-D-manno-heptose 7-phosphate and D-glycero-beta-D-manno-heptose 7-phosphate from sedoheptulose 7-phosphate: step 1/1. Functionally, catalyzes the isomerization of sedoheptulose 7-phosphate in D-glycero-D-manno-heptose 7-phosphate. This chain is Phosphoheptose isomerase, found in Pseudoalteromonas atlantica (strain T6c / ATCC BAA-1087).